A 134-amino-acid chain; its full sequence is Large ribosomal subunit protein uL18 (134 aa).

The interval Met1–Arg25 is disordered. Basic and acidic residues predominate over residues Asn7–Thr19.

The protein belongs to the universal ribosomal protein uL18 family. As to quaternary structure, part of the 50S ribosomal subunit; part of the 5S rRNA/L5/L18/L25 subcomplex. Contacts the 5S and 23S rRNAs.

Its function is as follows. This is one of the proteins that bind and probably mediate the attachment of the 5S RNA into the large ribosomal subunit, where it forms part of the central protuberance. The protein is Large ribosomal subunit protein uL18 of Corynebacterium jeikeium (strain K411).